Consider the following 837-residue polypeptide: Ubiquitin carboxyl-terminal hydrolase A (837 aa).

The segment at proline 166–proline 277 adopts a UBP-type; degenerate zinc-finger fold. Residues threonine 319–glutamine 835 enclose the USP domain. Residue cysteine 328 is the Nucleophile of the active site. Residues serine 628–histidine 669 enclose the UBA 1 domain. Positions aspartate 676–asparagine 695 are disordered. Low complexity predominate over residues asparagine 683–asparagine 695. In terms of domain architecture, UBA 2 spans valine 700–histidine 740. The Proton acceptor role is filled by histidine 797.

It belongs to the peptidase C19 family.

The catalysed reaction is Thiol-dependent hydrolysis of ester, thioester, amide, peptide and isopeptide bonds formed by the C-terminal Gly of ubiquitin (a 76-residue protein attached to proteins as an intracellular targeting signal).. Functionally, required for development but not growth. This is Ubiquitin carboxyl-terminal hydrolase A (ubpA) from Dictyostelium discoideum (Social amoeba).